Reading from the N-terminus, the 124-residue chain is UPF0102 protein Blon_1698/BLIJ_1758 (124 aa).

This sequence belongs to the UPF0102 family.

This Bifidobacterium longum subsp. infantis (strain ATCC 15697 / DSM 20088 / JCM 1222 / NCTC 11817 / S12) protein is UPF0102 protein Blon_1698/BLIJ_1758.